The following is a 202-amino-acid chain: Glycolipid transfer protein 1 (202 aa).

A ganglioside GM3 (d18:1(4E)) contacts are provided by Asp-52, Asn-56, Trp-99, and His-138.

This sequence belongs to the GLTP family.

Functionally, may be involved in glycolipids transfer. The protein is Glycolipid transfer protein 1 of Arabidopsis thaliana (Mouse-ear cress).